A 96-amino-acid polypeptide reads, in one-letter code: Small ribosomal subunit protein bS6 (96 aa).

Belongs to the bacterial ribosomal protein bS6 family.

Functionally, binds together with bS18 to 16S ribosomal RNA. The polypeptide is Small ribosomal subunit protein bS6 (Synechococcus sp. (strain JA-2-3B'a(2-13)) (Cyanobacteria bacterium Yellowstone B-Prime)).